The primary structure comprises 501 residues: Lysine--tRNA ligase (501 aa).

Residues E404 and E411 each contribute to the Mg(2+) site.

This sequence belongs to the class-II aminoacyl-tRNA synthetase family. As to quaternary structure, homodimer. It depends on Mg(2+) as a cofactor.

The protein resides in the cytoplasm. It catalyses the reaction tRNA(Lys) + L-lysine + ATP = L-lysyl-tRNA(Lys) + AMP + diphosphate. This is Lysine--tRNA ligase (lysS) from Campylobacter jejuni subsp. jejuni serotype O:2 (strain ATCC 700819 / NCTC 11168).